A 203-amino-acid polypeptide reads, in one-letter code: Protein-methionine-sulfoxide reductase heme-binding subunit MsrQ (203 aa).

5 helical membrane passes run 13-33, 79-99, 116-136, 147-167, and 169-189; these read IAIWLAATLPLLWLVLSINLG, LLGLWCFAWGTLHLLSYSILE, PYLTLGIISWLVLLALALTST, WQKLHNWVYVVAILAPIHYLW, and VKTLSPWPIIYAVMAALLLLL.

This sequence belongs to the MsrQ family. In terms of assembly, heterodimer of a catalytic subunit (MsrP) and a heme-binding subunit (MsrQ). It depends on FMN as a cofactor. Heme b is required as a cofactor.

It localises to the cell inner membrane. Functionally, part of the MsrPQ system that repairs oxidized periplasmic proteins containing methionine sulfoxide residues (Met-O), using respiratory chain electrons. Thus protects these proteins from oxidative-stress damage caused by reactive species of oxygen and chlorine generated by the host defense mechanisms. MsrPQ is essential for the maintenance of envelope integrity under bleach stress, rescuing a wide series of structurally unrelated periplasmic proteins from methionine oxidation. MsrQ provides electrons for reduction to the reductase catalytic subunit MsrP, using the quinone pool of the respiratory chain. The sequence is that of Protein-methionine-sulfoxide reductase heme-binding subunit MsrQ from Yersinia pseudotuberculosis serotype O:1b (strain IP 31758).